The following is a 656-amino-acid chain: Phosphoprotein 85 (656 aa).

Disordered regions lie at residues 1–174 and 615–656; these read MSSR…EGDE and NGNH…EYCC. Residues 46-55 show a composition bias toward basic and acidic residues; sequence SATEDLDRME. 2 stretches are compositionally biased toward low complexity: residues 59-70 and 140-160; these read SPYSVSSDAPSS and DNSS…RSTS. Positions 625–634 are enriched in pro residues; it reads SPPPPLPPRD. Positions 635–656 are enriched in basic and acidic residues; that stretch reads YPQRDERDRHRRDRRDSGEYCC.

Belongs to the herpesviridae pp85 family. Phosphorylated.

It localises to the virion tegument. It is found in the host cytoplasm. The polypeptide is Phosphoprotein 85 (UL25) (Homo sapiens (Human)).